Reading from the N-terminus, the 202-residue chain is Protein TIFY 11g (202 aa).

Gly residues predominate over residues Met-1–Ala-11. A disordered region spans residues Met-1–Ala-31. Positions Met-12–Gln-21 are enriched in low complexity. One can recognise a Tify domain in the interval Ala-101–His-136. A Jas motif is present at residues Pro-185–Lys-200. Positions Ala-187–Arg-194 match the Nuclear localization signal motif.

It belongs to the TIFY/JAZ family. In terms of processing, ubiquitinated. Targeted for degradation by the SCF(COI1) E3 ubiquitin ligase-proteasome pathway during jasmonate signaling.

The protein resides in the nucleus. Repressor of jasmonate responses. In Oryza sativa subsp. japonica (Rice), this protein is Protein TIFY 11g.